Consider the following 295-residue polypeptide: Light-independent protochlorophyllide reductase iron-sulfur ATP-binding protein (295 aa).

ATP contacts are provided by residues 39 to 44 and lysine 68; that span reads GIGKST. Residue serine 43 coordinates Mg(2+). The [4Fe-4S] cluster site is built by cysteine 124 and cysteine 158. Residue 209 to 210 participates in ATP binding; it reads NR.

Belongs to the NifH/BchL/ChlL family. Homodimer. Protochlorophyllide reductase is composed of three subunits; ChlL, ChlN and ChlB. It depends on [4Fe-4S] cluster as a cofactor.

It catalyses the reaction chlorophyllide a + oxidized 2[4Fe-4S]-[ferredoxin] + 2 ADP + 2 phosphate = protochlorophyllide a + reduced 2[4Fe-4S]-[ferredoxin] + 2 ATP + 2 H2O. It functions in the pathway porphyrin-containing compound metabolism; chlorophyll biosynthesis (light-independent). Component of the dark-operative protochlorophyllide reductase (DPOR) that uses Mg-ATP and reduced ferredoxin to reduce ring D of protochlorophyllide (Pchlide) to form chlorophyllide a (Chlide). This reaction is light-independent. The L component serves as a unique electron donor to the NB-component of the complex, and binds Mg-ATP. The protein is Light-independent protochlorophyllide reductase iron-sulfur ATP-binding protein of Prochlorococcus marinus (strain AS9601).